Consider the following 447-residue polypeptide: Methionine aminopeptidase 2 (447 aa).

The disordered stretch occupies residues 1–86 (MAGATEGEDT…KNKKKKKKKI (86 aa)). The span at 8–32 (EDTKVIESKINELNIDKPKLEDNNE) shows a compositional bias: basic and acidic residues. Residues 43-60 (GGDDDDDKEDDDDNDEIT) are compositionally biased toward acidic residues. A compositionally biased stretch (basic residues) spans 71-86 (KKKKKNKNKKKKKKKI). His198 provides a ligand contact to substrate. A divalent metal cation contacts are provided by Asp218, Asp229, and His300. Substrate is bound at residue His308. A divalent metal cation-binding residues include Glu333 and Glu428.

Belongs to the peptidase M24A family. Methionine aminopeptidase eukaryotic type 2 subfamily. Requires Co(2+) as cofactor. It depends on Zn(2+) as a cofactor. Mn(2+) serves as cofactor. Fe(2+) is required as a cofactor.

It localises to the cytoplasm. It catalyses the reaction Release of N-terminal amino acids, preferentially methionine, from peptides and arylamides.. In terms of biological role, cotranslationally removes the N-terminal methionine from nascent proteins. The N-terminal methionine is often cleaved when the second residue in the primary sequence is small and uncharged (Met-Ala-, Cys, Gly, Pro, Ser, Thr, or Val). In Candida albicans (strain WO-1) (Yeast), this protein is Methionine aminopeptidase 2.